Consider the following 368-residue polypeptide: Phosphate acyltransferase (368 aa).

Belongs to the PlsX family. Homodimer. Probably interacts with PlsY.

It is found in the cytoplasm. The catalysed reaction is a fatty acyl-[ACP] + phosphate = an acyl phosphate + holo-[ACP]. The protein operates within lipid metabolism; phospholipid metabolism. Functionally, catalyzes the reversible formation of acyl-phosphate (acyl-PO(4)) from acyl-[acyl-carrier-protein] (acyl-ACP). This enzyme utilizes acyl-ACP as fatty acyl donor, but not acyl-CoA. This chain is Phosphate acyltransferase, found in Methylibium petroleiphilum (strain ATCC BAA-1232 / LMG 22953 / PM1).